We begin with the raw amino-acid sequence, 246 residues long: Cell division protein ZapD (246 aa).

It belongs to the ZapD family. Interacts with FtsZ.

The protein localises to the cytoplasm. Cell division factor that enhances FtsZ-ring assembly. Directly interacts with FtsZ and promotes bundling of FtsZ protofilaments, with a reduction in FtsZ GTPase activity. The polypeptide is Cell division protein ZapD (Vibrio atlanticus (strain LGP32) (Vibrio splendidus (strain Mel32))).